Here is a 113-residue protein sequence, read N- to C-terminus: Prefoldin subunit beta (113 aa).

Belongs to the prefoldin subunit beta family. As to quaternary structure, heterohexamer of two alpha and four beta subunits.

The protein resides in the cytoplasm. Its function is as follows. Molecular chaperone capable of stabilizing a range of proteins. Seems to fulfill an ATP-independent, HSP70-like function in archaeal de novo protein folding. The protein is Prefoldin subunit beta of Methanococcus maripaludis (strain C6 / ATCC BAA-1332).